We begin with the raw amino-acid sequence, 489 residues long: Betaine aldehyde dehydrogenase (489 aa).

Residues Thr26 and Asp93 each coordinate K(+). Position 150 to 152 (150 to 152) interacts with NAD(+); that stretch reads GAW. Catalysis depends on Lys162, which acts as the Charge relay system. 176–179 lines the NAD(+) pocket; the sequence is KPSE. Residue Val180 participates in K(+) binding. 229-232 is a binding site for NAD(+); the sequence is GVET. Position 245 (Leu245) interacts with K(+). Glu251 serves as the catalytic Proton acceptor. The NAD(+) site is built by Gly253, Cys285, and Glu386. Residue Cys285 is the Nucleophile of the active site. Residue Cys285 is modified to Cysteine sulfenic acid (-SOH). K(+) contacts are provided by Lys456 and Gly459. The active-site Charge relay system is Glu463.

This sequence belongs to the aldehyde dehydrogenase family. Dimer of dimers. It depends on K(+) as a cofactor.

The enzyme catalyses betaine aldehyde + NAD(+) + H2O = glycine betaine + NADH + 2 H(+). It participates in amine and polyamine biosynthesis; betaine biosynthesis via choline pathway; betaine from betaine aldehyde: step 1/1. Involved in the biosynthesis of the osmoprotectant glycine betaine. Catalyzes the irreversible oxidation of betaine aldehyde to the corresponding acid. This is Betaine aldehyde dehydrogenase from Burkholderia pseudomallei (strain K96243).